The sequence spans 328 residues: DNA-directed RNA polymerase subunit alpha (328 aa).

The interval 1–230 (MNKIKITPSV…QSQMEIFTND (230 aa)) is alpha N-terminal domain (alpha-NTD). Residues 243–328 (NSEIFYQPLD…ILKKIEQNKS (86 aa)) are alpha C-terminal domain (alpha-CTD).

This sequence belongs to the RNA polymerase alpha chain family. Homodimer. The RNAP catalytic core consists of 2 alpha, 1 beta, 1 beta' and 1 omega subunit. When a sigma factor is associated with the core the holoenzyme is formed, which can initiate transcription.

The catalysed reaction is RNA(n) + a ribonucleoside 5'-triphosphate = RNA(n+1) + diphosphate. In terms of biological role, DNA-dependent RNA polymerase catalyzes the transcription of DNA into RNA using the four ribonucleoside triphosphates as substrates. In Nitratiruptor sp. (strain SB155-2), this protein is DNA-directed RNA polymerase subunit alpha.